Here is a 1515-residue protein sequence, read N- to C-terminus: Glutamate synthase [NADPH] large chain (1515 aa).

The propeptide occupies 1–36 (MTTELNQGEQFVADFRANAAALTTANAYNPEDEHDA). The active-site For GATase activity is C37. Positions 37–432 (CGVGFIAAID…PGEMIAVDLQ (396 aa)) constitute a Glutamine amidotransferase type-2 domain. The segment at 916-937 (AKSDSGEGGEDPARFRPDKNGD) is disordered. Residues 926 to 936 (DPARFRPDKNG) are compositionally biased toward basic and acidic residues. Residues 1085–1142 (LSEV…IMVR) and 1086–1142 (SEVH…IMVR) each bind FMN. [3Fe-4S] cluster-binding residues include C1138, C1144, and C1149.

The protein belongs to the glutamate synthase family. Aggregate of 4 catalytic active heterodimers, consisting of a large and a small subunit. [3Fe-4S] cluster serves as cofactor. It depends on FAD as a cofactor. Requires FMN as cofactor.

It carries out the reaction 2 L-glutamate + NADP(+) = L-glutamine + 2-oxoglutarate + NADPH + H(+). Its pathway is amino-acid biosynthesis; L-glutamate biosynthesis via GLT pathway; L-glutamate from 2-oxoglutarate and L-glutamine (NADP(+) route): step 1/1. It functions in the pathway energy metabolism; nitrogen metabolism. This is Glutamate synthase [NADPH] large chain (gltB) from Azospirillum brasilense.